The chain runs to 518 residues: MHLVDRVGANAPHKKYERVTTQPENPFFNIVHNQSVAIIPSFTLESGVILYDCPVAYKTFGVLNESADNVMVICHALTGSADVEDWWGPLIGPGRAFDTSRYFIVCCNSMGSPYGSASPCTLDSTTGRRYGPEFPLTTVRDDVRYGSTITMKLGCLLTYYRIHKLIMDDLGVRQIAVVIGGSMGGMLALEWAYFGKDYVKAVVALATSARHSAWCISWGEAQRQSIYSDPKYDDGYYSFSDPPYTGLGAARMSALLTYRSRNSFESRFGRNIPDPSRHPYINTSQPPSHPAEEHYDIHNEGFRNRKGFRRSSTTTSDAPPSPTRTSSTSSTDAITPASTTPLHPSRAQPSGIATPPNSVSDPFRPVKRPCPTYFSAQSYLRYQADKFVKRFDANCYIAITRKLDTHDVSRGRTSTLHEALAMIEQPTLIIGIESDGLFTFAEQMELAEYIPDARLKRIDSPEGHDAFLIMFAEVNRYICEFLREVQPEIMGKEGVHVESKVGEIRASTTGEVEDITHW.

The AB hydrolase-1 domain maps to 69 to 468; sequence NVMVICHALT…DSPEGHDAFL (400 aa). The active site involves Ser-182. Ser-182 acts as the Nucleophile in catalysis. A disordered region spans residues 267–365; it reads RFGRNIPDPS…PNSVSDPFRP (99 aa). The segment covering 290-303 has biased composition (basic and acidic residues); sequence PAEEHYDIHNEGFR. Residues 310–341 are compositionally biased toward low complexity; sequence RSSTTTSDAPPSPTRTSSTSSTDAITPASTTP. Residues Asp-435 and His-464 contribute to the active site.

This sequence belongs to the AB hydrolase superfamily. MetX family.

The catalysed reaction is L-homoserine + acetyl-CoA = O-acetyl-L-homoserine + CoA. Its pathway is amino-acid biosynthesis; L-methionine biosynthesis via de novo pathway; O-acetyl-L-homoserine from L-homoserine: step 1/1. Functionally, commits homoserine to the methionine biosynthesis pathway by catalyzing its O-acetylation. The chain is Homoserine O-acetyltransferase (MET2) from Ascobolus immersus.